A 192-amino-acid polypeptide reads, in one-letter code: Ion-translocating oxidoreductase complex subunit B (192 aa).

The segment at 1-26 (MNAIWIAVAAVSLLGLAFGAILGYAS) is hydrophobic. Residues 32 to 91 (EDDPVVEKIDEILPQSQCGQCGYPGCRPYAEAISCNGEKINRCAPGGEAVMLKIAELLNV) form the 4Fe-4S domain. Positions 49, 52, 57, 74, 117, 120, 123, 127, 147, 150, 153, and 157 each coordinate [4Fe-4S] cluster. 2 consecutive 4Fe-4S ferredoxin-type domains span residues 108 to 137 (MVAVIDENNCIGCTKCIQACPVDAIVGATR) and 138 to 167 (AMHTVMSDLCTGCNLCVDPCPTHCISLQPV).

This sequence belongs to the 4Fe4S bacterial-type ferredoxin family. RnfB subfamily. In terms of assembly, the complex is composed of six subunits: RsxA, RsxB, RsxC, RsxD, RsxE and RsxG. [4Fe-4S] cluster serves as cofactor.

It localises to the cell inner membrane. Part of a membrane-bound complex that couples electron transfer with translocation of ions across the membrane. Required to maintain the reduced state of SoxR. This is Ion-translocating oxidoreductase complex subunit B from Shigella dysenteriae serotype 1 (strain Sd197).